The following is a 216-amino-acid chain: ATP synthase subunit 5, mitochondrial (216 aa).

This sequence belongs to the ATPase delta chain family. In terms of assembly, F-type ATPases have 2 components, CF(1) - the catalytic core - and CF(0) - the membrane proton channel. CF(1) has five subunits: alpha(3), beta(3), gamma(1), delta(1), epsilon(1). CF(0) has three main subunits: a, b and c.

The protein resides in the mitochondrion. Its subcellular location is the mitochondrion inner membrane. Mitochondrial membrane ATP synthase (F(1)F(0) ATP synthase or Complex V) produces ATP from ADP in the presence of a proton gradient across the membrane which is generated by electron transport complexes of the respiratory chain. F-type ATPases consist of two structural domains, F(1) - containing the extramembraneous catalytic core and F(0) - containing the membrane proton channel, linked together by a central stalk and a peripheral stalk. During catalysis, ATP synthesis in the catalytic domain of F(1) is coupled via a rotary mechanism of the central stalk subunits to proton translocation. Part of the complex F(0) domain and the peripheric stalk, which acts as a stator to hold the catalytic alpha(3)beta(3) subcomplex and subunit a/ATP6 static relative to the rotary elements. This is ATP synthase subunit 5, mitochondrial (atp5) from Schizosaccharomyces pombe (strain 972 / ATCC 24843) (Fission yeast).